The chain runs to 77 residues: Small ribosomal subunit protein bS18 (77 aa).

It belongs to the bacterial ribosomal protein bS18 family. As to quaternary structure, part of the 30S ribosomal subunit. Forms a tight heterodimer with protein bS6.

In terms of biological role, binds as a heterodimer with protein bS6 to the central domain of the 16S rRNA, where it helps stabilize the platform of the 30S subunit. This chain is Small ribosomal subunit protein bS18, found in Desulforamulus reducens (strain ATCC BAA-1160 / DSM 100696 / MI-1) (Desulfotomaculum reducens).